Here is a 469-residue protein sequence, read N- to C-terminus: UDP-N-acetylmuramate--L-alanine ligase (469 aa).

120–126 (GTHGKTT) is an ATP binding site.

It belongs to the MurCDEF family.

It localises to the cytoplasm. It carries out the reaction UDP-N-acetyl-alpha-D-muramate + L-alanine + ATP = UDP-N-acetyl-alpha-D-muramoyl-L-alanine + ADP + phosphate + H(+). The protein operates within cell wall biogenesis; peptidoglycan biosynthesis. Its function is as follows. Cell wall formation. The chain is UDP-N-acetylmuramate--L-alanine ligase from Acetivibrio thermocellus (strain ATCC 27405 / DSM 1237 / JCM 9322 / NBRC 103400 / NCIMB 10682 / NRRL B-4536 / VPI 7372) (Clostridium thermocellum).